Here is a 521-residue protein sequence, read N- to C-terminus: Matrix metalloproteinase-A (521 aa).

Positions 1–21 (MFTGLHDILIILFLLVTLKIA) are cleaved as a signal peptide. A propeptide spans 22-95 (QNVDHTKFLQ…EDHQKSRGKR (74 aa)) (activation peptide). The Cysteine switch motif lies at 78–85 (PRCGHPDV). Zn(2+) is bound at residue cysteine 80. Topologically, residues 96–500 (YAPPQFKWKE…FCPRNEKLVL (405 aa)) are extracellular. Residue asparagine 199 is glycosylated (N-linked (GlcNAc...) asparagine). Histidine 215 is a binding site for Zn(2+). Glutamate 216 is a catalytic residue. Zn(2+) contacts are provided by histidine 219 and histidine 225. Positions 259–298 (KASKKENEEEERKTENEDKRRKTEKDRGRTREHESDDIRP) are disordered. Residues 261-298 (SKKENEEEERKTENEDKRRKTEKDRGRTREHESDDIRP) are compositionally biased toward basic and acidic residues. Hemopexin repeat units follow at residues 300 to 347 (ECRV…FPGL), 391 to 443 (EKYV…WARV), and 444 to 492 (PKGV…FGFC). An N-linked (GlcNAc...) asparagine glycan is attached at asparagine 469. A helical transmembrane segment spans residues 501–521 (NSSSSHFSLIYATITILILIF).

This sequence belongs to the peptidase M10A family. Requires Zn(2+) as cofactor. Expressed in the anchor cell. Expressed in the anchor cell throughout the L3 and the early L4 stage, but not in vulva precursor cells P6.p, P6.px, or P6.pxx. Expression in P6.pxxx cells begins in late-L4 stage. During L4 lethargus, expressed in all four vulE cells, but not in vulF cells. The expression in vulE cells persists in adulthood. In males, expressed in the linker cell (LC) from the early L4 stage until LC death during the L4-to-adult molt.

It is found in the cell membrane. The protein localises to the basolateral cell membrane. Metalloprotease which, together with cadherin cdh-3 and hemicentin him-4, plays a role in anchor cell (AC) invasion during postembryonic vulval development probably by promoting the degradation of the basement membrane separating the gonad from the vulva epithelium. This Caenorhabditis elegans protein is Matrix metalloproteinase-A.